The chain runs to 555 residues: Dihydroxy-acid dehydratase (555 aa).

A [2Fe-2S] cluster-binding site is contributed by Cys-46. Asp-78 is a Mg(2+) binding site. Residue Cys-119 participates in [2Fe-2S] cluster binding. Mg(2+) is bound by residues Asp-120 and Lys-121. At Lys-121 the chain carries N6-carboxylysine. A [2Fe-2S] cluster-binding site is contributed by Cys-191. A Mg(2+)-binding site is contributed by Glu-442. Ser-468 functions as the Proton acceptor in the catalytic mechanism.

Belongs to the IlvD/Edd family. As to quaternary structure, homodimer. The cofactor is [2Fe-2S] cluster. It depends on Mg(2+) as a cofactor.

The catalysed reaction is (2R)-2,3-dihydroxy-3-methylbutanoate = 3-methyl-2-oxobutanoate + H2O. The enzyme catalyses (2R,3R)-2,3-dihydroxy-3-methylpentanoate = (S)-3-methyl-2-oxopentanoate + H2O. The protein operates within amino-acid biosynthesis; L-isoleucine biosynthesis; L-isoleucine from 2-oxobutanoate: step 3/4. Its pathway is amino-acid biosynthesis; L-valine biosynthesis; L-valine from pyruvate: step 3/4. Functions in the biosynthesis of branched-chain amino acids. Catalyzes the dehydration of (2R,3R)-2,3-dihydroxy-3-methylpentanoate (2,3-dihydroxy-3-methylvalerate) into 2-oxo-3-methylpentanoate (2-oxo-3-methylvalerate) and of (2R)-2,3-dihydroxy-3-methylbutanoate (2,3-dihydroxyisovalerate) into 2-oxo-3-methylbutanoate (2-oxoisovalerate), the penultimate precursor to L-isoleucine and L-valine, respectively. The sequence is that of Dihydroxy-acid dehydratase from Thermus thermophilus (strain ATCC 27634 / DSM 579 / HB8).